Reading from the N-terminus, the 95-residue chain is Protein IDA-LIKE 2 (95 aa).

Residues 1–35 form the signal peptide; sequence MSSRNQRSRITSSFFVSFFTRTILLLLILLLGFCN. Residues 75 to 95 are disordered; sequence ASGPSRKHNDIGLLSWHRSSP.

Expressed in leaves, buds, flowers, seedlings and seeds. Detected at the base of pedicel, in the floral and funicule abscission zones and in vascular tissues.

Its subcellular location is the secreted. The protein resides in the extracellular space. May be involved in floral abscission. The polypeptide is Protein IDA-LIKE 2 (IDL2) (Arabidopsis thaliana (Mouse-ear cress)).